The chain runs to 129 residues: MRLHLLKSKIHNAIVTSGDLEYEGSITIDSQLLELADMLPNEKVLCVNNNNGERFETYIIKGKAGSREIQLNGAAARCALPGDEIIIMTFAEIEAEKAKDFKPMILIVDHQNNPKRRHLVGEEDTPLPH.

The active-site Schiff-base intermediate with substrate; via pyruvic acid is S25. S25 is modified (pyruvic acid (Ser)). Position 57 (T57) interacts with substrate. Catalysis depends on Y58, which acts as the Proton donor. 73–75 (GAA) lines the substrate pocket.

This sequence belongs to the PanD family. In terms of assembly, heterooctamer of four alpha and four beta subunits. Pyruvate serves as cofactor. Is synthesized initially as an inactive proenzyme, which is activated by self-cleavage at a specific serine bond to produce a beta-subunit with a hydroxyl group at its C-terminus and an alpha-subunit with a pyruvoyl group at its N-terminus.

The protein localises to the cytoplasm. The enzyme catalyses L-aspartate + H(+) = beta-alanine + CO2. It functions in the pathway cofactor biosynthesis; (R)-pantothenate biosynthesis; beta-alanine from L-aspartate: step 1/1. Catalyzes the pyruvoyl-dependent decarboxylation of aspartate to produce beta-alanine. In Prosthecochloris aestuarii (strain DSM 271 / SK 413), this protein is Aspartate 1-decarboxylase.